The sequence spans 764 residues: Chloride anion exchanger (764 aa).

Topologically, residues 1 to 76 (MIEPFGNQYI…YRLKEWLLSD (76 aa)) are cytoplasmic. A helical transmembrane segment spans residues 77 to 97 (IVSGISTGIVAVLQGLAFALL). The Extracellular segment spans residues 98 to 99 (VD). Residues 100-120 (IPPVYGLYASFFPAIIYLFFG) form a helical membrane-spanning segment. Residues 121–124 (TSRH) are Cytoplasmic-facing. The chain crosses the membrane as a helical span at residues 125–145 (ISVGPFPILSMMVGLAVSGAV). At 146-175 (SKAVPDRNATTLGLPNNSNNSSLLDDERVR) the chain is on the extracellular side. N-linked (GlcNAc...) asparagine glycosylation is found at Asn153, Asn161, and Asn165. A helical membrane pass occupies residues 176-196 (VAAAASVTVLSGIIQLAFGIL). A topological domain (cytoplasmic) is located at residue Arg197. The chain crosses the membrane as a helical span at residues 198–218 (IGFVVIYLSESLISGFTTAAA). At 219-257 (VHVLVSQLKFIFQLTVPSHTDPVSIFKVLYSVFSQIEKT) the chain is on the extracellular side. Residues 258-278 (NIADLVTALIVLLVVSIVKEI) traverse the membrane as a helical segment. At 279–342 (NQRFKDKLPV…VETFQNTVGD (64 aa)) the chain is on the cytoplasmic side. The helical transmembrane segment at 343–363 (CFGIAMVAFAVAFSVASVYSL) threads the bilayer. The Extracellular segment spans residues 364–374 (KYDYPLDGNQE). The helical transmembrane segment at 375–395 (LIALGLGNIVCGVFRGFAGST) threads the bilayer. The Cytoplasmic segment spans residues 396–411 (ALSRSAVQESTGGKTQ). The chain crosses the membrane as a helical span at residues 412 to 432 (IAGLIGAIIVLIVVLAIGFLL). At 433–469 (APLQKSVLAALALGNLKGMLMQFAEIGRLWRKDKYDC) the chain is on the extracellular side. A helical transmembrane segment spans residues 470-490 (LIWIMTFIFTIVLGLGLGLAA). Residues 491-701 (SVAFQLLTIV…EKLNRYEFFD (211 aa)) lie on the Cytoplasmic side of the membrane. The region spanning 525-720 (DYYDMYEPEG…LTIHDAVLHI (196 aa)) is the STAS domain. The PDZ-binding motif lies at 761 to 764 (ETKF).

The protein belongs to the SLC26A/SulP transporter (TC 2.A.53) family. As to quaternary structure, interacts with CFTR, SLC26A6 and NHERF1. Interacts with PDZK1. Interacts (via PDZ-binding motif) with NHERF4 (via the third PDZ domain); interaction leads to decreased expression of SLC26A3 on the cell membrane resulting in its reduced exchanger activity. In terms of processing, N-glycosylation is required for efficient cell surface expression, and protection from proteolytic degradation. In terms of tissue distribution, expressed in the colon. Expression is significantly decreased in adenomas (polyps) and adenocarcinomas of the colon.

The protein resides in the apical cell membrane. Its subcellular location is the membrane. The protein localises to the cell membrane. It carries out the reaction hydrogencarbonate(in) + 2 chloride(out) = hydrogencarbonate(out) + 2 chloride(in). Its activity is regulated as follows. Inhibited by acidic pH. Mediates chloride-bicarbonate exchange with a chloride bicarbonate stoichiometry of 2:1 in the intestinal epithelia. Plays a role in the chloride and bicarbonate homeostasis during sperm epididymal maturation and capacitation. This chain is Chloride anion exchanger (SLC26A3), found in Homo sapiens (Human).